Reading from the N-terminus, the 453-residue chain is MVQINEIKSNSRDTRTAAHTHIRGLGLNEMGVAKPIDAGFVGQTEAREALGLVVDLIRASKMSGRGILLAGGPGTGKTALALAVSQELGPKVPFCPIVGSEIFSAEVKKTAALMENFRRAIGLRIKETKDIYEGEVTELTPEEAEDPLGGYGKTIRSVVVGLKSYRGTKQLRLDPKIYESIQKERVAVGDVIYIEANTGAVKRVGRSDAYATEFDLETEEYVPLPKGEVHKKKEIVQDVTLHDLDVANARPQGGQDVMSMMGSLMKPKKTEITDKLREEVNKKVQSYIDQGVAELVPGVLFIDEVNMLDVECFTYLNRALESTISPIVILASNRGMCRVRGVDDDVSPHGITTDLLDRLLIVRTLPYSLDEIKTIIQKRAVVEQQQISEDALDALAQHGARTSLRYGLQLLSPAGVLAKSEGRDVVEVKDVEECESLFLDATRSKGRFTDKFL.

71–78 (GGPGTGKT) lines the ATP pocket.

The protein belongs to the RuvB family. In terms of assembly, may form heterododecamers with RVB2. Component of the SWR1 chromatin remodeling complex, the INO80 chromatin remodeling complex, and of the R2TP complex.

The protein resides in the nucleus. The catalysed reaction is ATP + H2O = ADP + phosphate + H(+). Its function is as follows. DNA helicase which participates in several chromatin remodeling complexes, including the SWR1 and the INO80 complexes. The SWR1 complex mediates the ATP-dependent exchange of histone H2A for the H2A variant HZT1 leading to transcriptional regulation of selected genes by chromatin remodeling. The INO80 complex remodels chromatin by shifting nucleosomes and is involved in DNA repair. Also involved in pre-rRNA processing. In Yarrowia lipolytica (strain CLIB 122 / E 150) (Yeast), this protein is RuvB-like helicase 1 (RVB1).